The following is a 230-amino-acid chain: Cytochrome c oxidase subunit 2 (230 aa).

Over 1-14 (MAYPLQLGFQDATS) the chain is Mitochondrial intermembrane. Residues 15-45 (PIMEELLHFHDHTLMIVFLISSLVLYIISTM) form a helical membrane-spanning segment. The Mitochondrial matrix segment spans residues 46-59 (LTTKLTHTNTMDAQ). The helical transmembrane segment at 60 to 87 (EVETIWTILPAIILILIALPSLRILYMM) threads the bilayer. Residues 88–230 (DEINNPNLTI…NWTSSMMSTS (143 aa)) lie on the Mitochondrial intermembrane side of the membrane. Positions 161, 196, 198, 200, 204, and 207 each coordinate Cu cation. Residue Glu198 participates in Mg(2+) binding. Position 218 is a phosphotyrosine (Tyr218).

It belongs to the cytochrome c oxidase subunit 2 family. Component of the cytochrome c oxidase (complex IV, CIV), a multisubunit enzyme composed of 14 subunits. The complex is composed of a catalytic core of 3 subunits MT-CO1, MT-CO2 and MT-CO3, encoded in the mitochondrial DNA, and 11 supernumerary subunits COX4I, COX5A, COX5B, COX6A, COX6B, COX6C, COX7A, COX7B, COX7C, COX8 and NDUFA4, which are encoded in the nuclear genome. The complex exists as a monomer or a dimer and forms supercomplexes (SCs) in the inner mitochondrial membrane with NADH-ubiquinone oxidoreductase (complex I, CI) and ubiquinol-cytochrome c oxidoreductase (cytochrome b-c1 complex, complex III, CIII), resulting in different assemblies (supercomplex SCI(1)III(2)IV(1) and megacomplex MCI(2)III(2)IV(2)). Found in a complex with TMEM177, COA6, COX18, COX20, SCO1 and SCO2. Interacts with TMEM177 in a COX20-dependent manner. Interacts with COX20. Interacts with COX16. Requires Cu cation as cofactor.

The protein resides in the mitochondrion inner membrane. The catalysed reaction is 4 Fe(II)-[cytochrome c] + O2 + 8 H(+)(in) = 4 Fe(III)-[cytochrome c] + 2 H2O + 4 H(+)(out). Its function is as follows. Component of the cytochrome c oxidase, the last enzyme in the mitochondrial electron transport chain which drives oxidative phosphorylation. The respiratory chain contains 3 multisubunit complexes succinate dehydrogenase (complex II, CII), ubiquinol-cytochrome c oxidoreductase (cytochrome b-c1 complex, complex III, CIII) and cytochrome c oxidase (complex IV, CIV), that cooperate to transfer electrons derived from NADH and succinate to molecular oxygen, creating an electrochemical gradient over the inner membrane that drives transmembrane transport and the ATP synthase. Cytochrome c oxidase is the component of the respiratory chain that catalyzes the reduction of oxygen to water. Electrons originating from reduced cytochrome c in the intermembrane space (IMS) are transferred via the dinuclear copper A center (CU(A)) of subunit 2 and heme A of subunit 1 to the active site in subunit 1, a binuclear center (BNC) formed by heme A3 and copper B (CU(B)). The BNC reduces molecular oxygen to 2 water molecules using 4 electrons from cytochrome c in the IMS and 4 protons from the mitochondrial matrix. The protein is Cytochrome c oxidase subunit 2 (MT-CO2) of Ornithorhynchus anatinus (Duckbill platypus).